The chain runs to 96 residues: UPF0235 protein MK0273 (96 aa).

It belongs to the UPF0235 family.

In Methanopyrus kandleri (strain AV19 / DSM 6324 / JCM 9639 / NBRC 100938), this protein is UPF0235 protein MK0273.